A 208-amino-acid polypeptide reads, in one-letter code: Glutathione S-transferase (208 aa).

The region spanning 1–78 (MSYKLTYFPI…HLARKFNLNG (78 aa)) is the GST N-terminal domain. Glutathione contacts are provided by residues tyrosine 7, lysine 42, 49 to 50 (QL), and 62 to 63 (QS). One can recognise a GST C-terminal domain in the interval 80-200 (NNAETSYVDM…YCAKRNASKM (121 aa)).

Belongs to the GST superfamily. Pi family. As to quaternary structure, homodimer.

The enzyme catalyses RX + glutathione = an S-substituted glutathione + a halide anion + H(+). Its function is as follows. Conjugation of reduced glutathione to a wide number of exogenous and endogenous hydrophobic electrophiles. This is Glutathione S-transferase from Dirofilaria immitis (Canine heartworm).